We begin with the raw amino-acid sequence, 122 residues long: Large ribosomal subunit protein uL14 (122 aa).

This sequence belongs to the universal ribosomal protein uL14 family. In terms of assembly, part of the 50S ribosomal subunit. Forms a cluster with proteins L3 and L19. In the 70S ribosome, L14 and L19 interact and together make contacts with the 16S rRNA in bridges B5 and B8.

Its function is as follows. Binds to 23S rRNA. Forms part of two intersubunit bridges in the 70S ribosome. This Geotalea daltonii (strain DSM 22248 / JCM 15807 / FRC-32) (Geobacter daltonii) protein is Large ribosomal subunit protein uL14.